The sequence spans 201 residues: FMN-dependent NADH:quinone oxidoreductase (201 aa).

FMN is bound by residues Ser-10, 16–18 (SQS), 96–99 (MYNF), and 140–143 (SRGG).

Belongs to the azoreductase type 1 family. Homodimer. FMN is required as a cofactor.

The enzyme catalyses 2 a quinone + NADH + H(+) = 2 a 1,4-benzosemiquinone + NAD(+). It carries out the reaction N,N-dimethyl-1,4-phenylenediamine + anthranilate + 2 NAD(+) = 2-(4-dimethylaminophenyl)diazenylbenzoate + 2 NADH + 2 H(+). Quinone reductase that provides resistance to thiol-specific stress caused by electrophilic quinones. Its function is as follows. Also exhibits azoreductase activity. Catalyzes the reductive cleavage of the azo bond in aromatic azo compounds to the corresponding amines. The chain is FMN-dependent NADH:quinone oxidoreductase from Cronobacter sakazakii (strain ATCC BAA-894) (Enterobacter sakazakii).